The following is a 436-amino-acid chain: GTPase Der (436 aa).

EngA-type G domains are found at residues 4–167 (PVVA…PKDH) and 176–351 (IKFC…DNHA). GTP is bound by residues 10-17 (GRPNVGKS), 57-61 (DTGGI), 119-122 (NKID), 182-189 (GRPNVGKS), 229-233 (DTAGM), and 294-297 (NKWD). One can recognise a KH-like domain in the interval 352–436 (MRVQTNVLNE…PIKIIARPRK (85 aa)).

The protein belongs to the TRAFAC class TrmE-Era-EngA-EngB-Septin-like GTPase superfamily. EngA (Der) GTPase family. Associates with the 50S ribosomal subunit.

GTPase that plays an essential role in the late steps of ribosome biogenesis. In Geobacillus thermodenitrificans (strain NG80-2), this protein is GTPase Der.